The sequence spans 351 residues: Glycerol-3-phosphate dehydrogenase [NAD(P)+] (351 aa).

NADPH is bound by residues S12, W13, H33, and K114. Sn-glycerol 3-phosphate is bound by residues K114, G145, and S147. A149 is a binding site for NADPH. Sn-glycerol 3-phosphate is bound by residues K200, D253, S263, R264, and N265. K200 serves as the catalytic Proton acceptor. R264 serves as a coordination point for NADPH. 2 residues coordinate NADPH: V288 and E290.

The protein belongs to the NAD-dependent glycerol-3-phosphate dehydrogenase family.

It localises to the cytoplasm. It carries out the reaction sn-glycerol 3-phosphate + NAD(+) = dihydroxyacetone phosphate + NADH + H(+). The catalysed reaction is sn-glycerol 3-phosphate + NADP(+) = dihydroxyacetone phosphate + NADPH + H(+). Its pathway is membrane lipid metabolism; glycerophospholipid metabolism. Its function is as follows. Catalyzes the reduction of the glycolytic intermediate dihydroxyacetone phosphate (DHAP) to sn-glycerol 3-phosphate (G3P), the key precursor for phospholipid synthesis. The chain is Glycerol-3-phosphate dehydrogenase [NAD(P)+] from Lacticaseibacillus paracasei (strain ATCC 334 / BCRC 17002 / CCUG 31169 / CIP 107868 / KCTC 3260 / NRRL B-441) (Lactobacillus paracasei).